We begin with the raw amino-acid sequence, 311 residues long: tRNA-cytidine(32) 2-sulfurtransferase (311 aa).

The short motif at 47 to 52 is the PP-loop motif element; that stretch reads SGGKDS. C122, C125, and C213 together coordinate [4Fe-4S] cluster.

The protein belongs to the TtcA family. As to quaternary structure, homodimer. Requires Mg(2+) as cofactor. The cofactor is [4Fe-4S] cluster.

The protein resides in the cytoplasm. It carries out the reaction cytidine(32) in tRNA + S-sulfanyl-L-cysteinyl-[cysteine desulfurase] + AH2 + ATP = 2-thiocytidine(32) in tRNA + L-cysteinyl-[cysteine desulfurase] + A + AMP + diphosphate + H(+). Its pathway is tRNA modification. In terms of biological role, catalyzes the ATP-dependent 2-thiolation of cytidine in position 32 of tRNA, to form 2-thiocytidine (s(2)C32). The sulfur atoms are provided by the cysteine/cysteine desulfurase (IscS) system. This Escherichia coli O81 (strain ED1a) protein is tRNA-cytidine(32) 2-sulfurtransferase.